Reading from the N-terminus, the 284-residue chain is RNase adapter protein RapZ (284 aa).

Residue 8 to 15 (GRSGSGKS) participates in ATP binding. 56 to 59 (DVRN) lines the GTP pocket. The segment at 266-284 (RSRGKNVQSRHRTLEKRKP) is RNA-binding.

This sequence belongs to the RapZ-like family. RapZ subfamily. As to quaternary structure, homotrimer.

In terms of biological role, modulates the synthesis of GlmS, by affecting the processing and stability of the regulatory small RNA GlmZ. When glucosamine-6-phosphate (GlcN6P) concentrations are high in the cell, RapZ binds GlmZ and targets it to cleavage by RNase E. Consequently, GlmZ is inactivated and unable to activate GlmS synthesis. Under low GlcN6P concentrations, RapZ is sequestered and inactivated by an other regulatory small RNA, GlmY, preventing GlmZ degradation and leading to synthesis of GlmS. The protein is RNase adapter protein RapZ of Escherichia coli O1:K1 / APEC.